The chain runs to 527 residues: EGF domain-specific O-linked N-acetylglucosamine transferase (527 aa).

Positions 1–19 are cleaved as a signal peptide; that stretch reads MLMLLVFGVLLHEVPLSGQ. The Required for optimal activity signature appears at 295–297; sequence DYD. N-linked (GlcNAc...) asparagine glycosylation occurs at Asn-354. Positions 524–527 match the Prevents secretion from ER motif; it reads HDEL.

This sequence belongs to the glycosyltransferase 61 family.

The protein localises to the endoplasmic reticulum lumen. It catalyses the reaction L-seryl-[protein] + UDP-N-acetyl-alpha-D-glucosamine = 3-O-(N-acetyl-beta-D-glucosaminyl)-L-seryl-[protein] + UDP + H(+). The enzyme catalyses L-threonyl-[protein] + UDP-N-acetyl-alpha-D-glucosamine = 3-O-(N-acetyl-beta-D-glucosaminyl)-L-threonyl-[protein] + UDP + H(+). Its function is as follows. Catalyzes the transfer of a single N-acetylglucosamine from UDP-GlcNAc to a serine or threonine residue in extracellular proteins resulting in their modification with a beta-linked N-acetylglucosamine (O-GlcNAc). Specifically glycosylates the Thr residue located between the fifth and sixth conserved cysteines of folded EGF-like domains. The protein is EGF domain-specific O-linked N-acetylglucosamine transferase (Eogt) of Rattus norvegicus (Rat).